The sequence spans 349 residues: DNA-directed RNA polymerase subunit alpha (349 aa).

An alpha N-terminal domain (alpha-NTD) region spans residues 1–226 (MLIAQRPTLI…GLFGLAQELN (226 aa)). Residues 241–349 (AALAADLALP…GAEFIETEQY (109 aa)) are alpha C-terminal domain (alpha-CTD). A disordered region spans residues 309 to 349 (KDSPPGFDPRQAVDTYGTDAYSPSFSDPSDDGAEFIETEQY). The span at 336 to 349 (PSDDGAEFIETEQY) shows a compositional bias: acidic residues.

This sequence belongs to the RNA polymerase alpha chain family. As to quaternary structure, homodimer. The RNAP catalytic core consists of 2 alpha, 1 beta, 1 beta' and 1 omega subunit. When a sigma factor is associated with the core the holoenzyme is formed, which can initiate transcription.

The catalysed reaction is RNA(n) + a ribonucleoside 5'-triphosphate = RNA(n+1) + diphosphate. DNA-dependent RNA polymerase catalyzes the transcription of DNA into RNA using the four ribonucleoside triphosphates as substrates. This Frankia casuarinae (strain DSM 45818 / CECT 9043 / HFP020203 / CcI3) protein is DNA-directed RNA polymerase subunit alpha.